Consider the following 24-residue polypeptide: NLMQFELLIMKVAGRSGIVWYSDY.

It belongs to the phospholipase A2 family. Group II subfamily. Requires Ca(2+) as cofactor. In terms of tissue distribution, expressed by the venom gland.

The protein localises to the secreted. The enzyme catalyses a 1,2-diacyl-sn-glycero-3-phosphocholine + H2O = a 1-acyl-sn-glycero-3-phosphocholine + a fatty acid + H(+). PLA2 catalyzes the calcium-dependent hydrolysis of the 2-acyl groups in 3-sn-phosphoglycerides. The sequence is that of Acidic phospholipase A2 4 from Trimeresurus stejnegeri (Chinese green tree viper).